Here is a 651-residue protein sequence, read N- to C-terminus: Acetyl-coenzyme A synthetase (651 aa).

CoA-binding positions include 191 to 194 (RGGK), Thr311, and Asn335. ATP contacts are provided by residues 387–389 (GEP), 411–416 (DTWWQT), Asp500, and Arg515. CoA is bound at residue Ser523. An ATP-binding site is contributed by Arg526. 3 residues coordinate Mg(2+): Val537, His539, and Val542. Arg584 lines the CoA pocket. N6-acetyllysine is present on Lys609.

Belongs to the ATP-dependent AMP-binding enzyme family. The cofactor is Mg(2+). Post-translationally, acetylated. Deacetylation by the SIR2-homolog deacetylase activates the enzyme.

It carries out the reaction acetate + ATP + CoA = acetyl-CoA + AMP + diphosphate. Functionally, catalyzes the conversion of acetate into acetyl-CoA (AcCoA), an essential intermediate at the junction of anabolic and catabolic pathways. AcsA undergoes a two-step reaction. In the first half reaction, AcsA combines acetate with ATP to form acetyl-adenylate (AcAMP) intermediate. In the second half reaction, it can then transfer the acetyl group from AcAMP to the sulfhydryl group of CoA, forming the product AcCoA. The polypeptide is Acetyl-coenzyme A synthetase (Pseudomonas savastanoi pv. phaseolicola (strain 1448A / Race 6) (Pseudomonas syringae pv. phaseolicola (strain 1448A / Race 6))).